A 262-amino-acid polypeptide reads, in one-letter code: Small ribosomal subunit protein uS2 (262 aa).

The protein belongs to the universal ribosomal protein uS2 family.

The protein is Small ribosomal subunit protein uS2 of Borreliella afzelii (strain PKo) (Borrelia afzelii).